Consider the following 513-residue polypeptide: Xylose import ATP-binding protein XylG (513 aa).

ABC transporter domains are found at residues 5 to 242 (LEMK…VGRE) and 259 to 505 (LRIE…LRSE). 37–44 (GENGSGKS) is an ATP binding site.

This sequence belongs to the ABC transporter superfamily. Xylose importer (TC 3.A.1.2.4) family. In terms of assembly, the complex is composed of two ATP-binding proteins (XylG), two transmembrane proteins (XylH) and a solute-binding protein (XylF).

The protein resides in the cell inner membrane. The catalysed reaction is D-xylose(out) + ATP + H2O = D-xylose(in) + ADP + phosphate + H(+). In terms of biological role, part of the ABC transporter complex XylFGH involved in xylose import. Responsible for energy coupling to the transport system. This is Xylose import ATP-binding protein XylG from Shigella flexneri serotype 5b (strain 8401).